A 108-amino-acid polypeptide reads, in one-letter code: MSFSRRPKVTKSDIVDQISLNIRNNNLKLEKKYIRLVIDAFFEELKGNLCSNNVIEFRSFGTFEVRKRKGRLNARNPQTGEYVKVLDHHVAYFRPGKDLKERVWGIKG.

Belongs to the bacterial histone-like protein family.

Histone-like DNA-binding protein which is capable of wrapping DNA to stabilize it, and thus to prevent its denaturation under extreme environmental conditions. This Borreliella japonica (Borrelia japonica) protein is DNA-binding protein HBbu (hbb).